A 403-amino-acid polypeptide reads, in one-letter code: Argininosuccinate synthase (403 aa).

ATP is bound at residue 9–17 (AYSGGLDTS). Residue Tyr86 coordinates L-citrulline. ATP is bound at residue Gly116. 3 residues coordinate L-aspartate: Thr118, Asn122, and Asp123. Asn122 is a binding site for L-citrulline. L-citrulline contacts are provided by Arg126, Ser174, Glu259, and Tyr271.

It belongs to the argininosuccinate synthase family. Type 1 subfamily. In terms of assembly, homotetramer.

It localises to the cytoplasm. It catalyses the reaction L-citrulline + L-aspartate + ATP = 2-(N(omega)-L-arginino)succinate + AMP + diphosphate + H(+). It functions in the pathway amino-acid biosynthesis; L-arginine biosynthesis; L-arginine from L-ornithine and carbamoyl phosphate: step 2/3. This chain is Argininosuccinate synthase, found in Ligilactobacillus salivarius (strain UCC118) (Lactobacillus salivarius).